Consider the following 180-residue polypeptide: PRA1 family protein F1 (180 aa).

Transmembrane regions (helical) follow at residues 63 to 83 (ANTV…VFLS), 84 to 104 (LIWN…WLFL), 123 to 143 (IVLI…DAKL), and 145 to 165 (IAVA…VRKT).

Belongs to the PRA1 family. As to quaternary structure, interacts with PRA1F2. Expressed in hypocotyls, leaf bases and shoot apex.

The protein localises to the endosome membrane. In terms of biological role, may be involved in both secretory and endocytic intracellular trafficking in the endosomal/prevacuolar compartments. The protein is PRA1 family protein F1 (PRA1F1) of Arabidopsis thaliana (Mouse-ear cress).